A 918-amino-acid polypeptide reads, in one-letter code: Glutamate receptor 2.5 (918 aa).

Residues 1-30 form the signal peptide; the sequence is MSLFHHLVSRFLSLWLLIFLVFLVLSLGKS. Over 31–586 the chain is Extracellular; sequence QKEALQVKVG…WVFLKPLTKE (556 aa). N-linked (GlcNAc...) asparagine glycosylation is found at Asn46, Asn58, Asn122, Asn336, Asn340, and Asn546. Residues 587-607 form a helical membrane-spanning segment; sequence LWLVTAASFLYIGIMVWIFEY. The Cytoplasmic portion of the chain corresponds to 608-616; that stretch reads QADEEFREQ. A helical membrane pass occupies residues 617–637; sequence MIIDKISSVFYFSFSTLFFAH. Over 638–647 the chain is Cytoplasmic; it reads RRPSESFFTR. The chain crosses the membrane as a helical span at residues 648–668; sequence VLVVVWCFVLLILTQSYTATL. Residues 669–828 lie on the Extracellular side of the membrane; the sequence is TSMLTVQELR…DSPIQLDHHS (160 aa). The N-linked (GlcNAc...) asparagine glycan is linked to Asn791. Residues 829–849 form a helical membrane-spanning segment; that stretch reads FEALFLIVFVVSVILLLLMLA. The Cytoplasmic portion of the chain corresponds to 850-918; the sequence is SRGYQERQHN…VAPLSRLKSA (69 aa). Positions 857–881 are disordered; that stretch reads QHNASPNLPNDQANAAQEEVNEEGN. Positions 866–881 are enriched in low complexity; sequence NDQANAAQEEVNEEGN.

The protein belongs to the glutamate-gated ion channel (TC 1.A.10.1) family. In terms of assembly, may form heteromers. As to expression, expressed predominantly in roots.

It localises to the membrane. Glutamate-gated receptor that probably acts as a non-selective cation channel. May be involved in light-signal transduction and calcium homeostasis via the regulation of calcium influx into cells. The sequence is that of Glutamate receptor 2.5 (GLR2.5) from Arabidopsis thaliana (Mouse-ear cress).